Consider the following 428-residue polypeptide: Serine--tRNA ligase (428 aa).

235–237 is an L-serine binding site; the sequence is TAE. 266–268 provides a ligand contact to ATP; the sequence is RSE. E289 contributes to the L-serine binding site. 353 to 356 contributes to the ATP binding site; it reads EISS. An L-serine-binding site is contributed by S389.

The protein belongs to the class-II aminoacyl-tRNA synthetase family. Type-1 seryl-tRNA synthetase subfamily. As to quaternary structure, homodimer. The tRNA molecule binds across the dimer.

Its subcellular location is the cytoplasm. The catalysed reaction is tRNA(Ser) + L-serine + ATP = L-seryl-tRNA(Ser) + AMP + diphosphate + H(+). It carries out the reaction tRNA(Sec) + L-serine + ATP = L-seryl-tRNA(Sec) + AMP + diphosphate + H(+). The protein operates within aminoacyl-tRNA biosynthesis; selenocysteinyl-tRNA(Sec) biosynthesis; L-seryl-tRNA(Sec) from L-serine and tRNA(Sec): step 1/1. Functionally, catalyzes the attachment of serine to tRNA(Ser). Is also able to aminoacylate tRNA(Sec) with serine, to form the misacylated tRNA L-seryl-tRNA(Sec), which will be further converted into selenocysteinyl-tRNA(Sec). This Shewanella sp. (strain ANA-3) protein is Serine--tRNA ligase.